We begin with the raw amino-acid sequence, 265 residues long: Metal-activated transcriptional activator protein AMT1 (265 aa).

Residues 1–40 (MVVINGVKYACDSCIKSHKAAQCEHNDRPLKILKPRGRPP) constitute a DNA-binding region (copper-fist). Cys-11, Cys-14, Cys-23, and His-25 together coordinate Zn(2+). Positions 103–129 (RRKRTQKSNKKDNLSINSPTNNSPSPA) are disordered. Residues 119 to 128 (NSPTNNSPSP) show a composition bias toward low complexity.

Its subcellular location is the nucleus. Functionally, trans-acting regulatory protein that activates transcription of the MT genes (metallothionein) in response to copper or silver ions. This is Metal-activated transcriptional activator protein AMT1 (AMT1) from Candida glabrata (strain ATCC 2001 / BCRC 20586 / JCM 3761 / NBRC 0622 / NRRL Y-65 / CBS 138) (Yeast).